Here is a 192-residue protein sequence, read N- to C-terminus: Ribosomal RNA small subunit methyltransferase G (192 aa).

Residues glycine 63, leucine 68, 112-113, and arginine 125 contribute to the S-adenosyl-L-methionine site; that span reads IE.

It belongs to the methyltransferase superfamily. RNA methyltransferase RsmG family.

Its subcellular location is the cytoplasm. It carries out the reaction guanosine(527) in 16S rRNA + S-adenosyl-L-methionine = N(7)-methylguanosine(527) in 16S rRNA + S-adenosyl-L-homocysteine. Its function is as follows. Specifically methylates the N7 position of guanine in position 527 of 16S rRNA. This Rickettsia africae (strain ESF-5) protein is Ribosomal RNA small subunit methyltransferase G.